We begin with the raw amino-acid sequence, 156 residues long: Cyanate hydratase (156 aa).

Catalysis depends on residues arginine 96, glutamate 99, and serine 122.

The protein belongs to the cyanase family.

It catalyses the reaction cyanate + hydrogencarbonate + 3 H(+) = NH4(+) + 2 CO2. Its function is as follows. Catalyzes the reaction of cyanate with bicarbonate to produce ammonia and carbon dioxide. The protein is Cyanate hydratase of Burkholderia thailandensis (strain ATCC 700388 / DSM 13276 / CCUG 48851 / CIP 106301 / E264).